A 76-amino-acid polypeptide reads, in one-letter code: MGNIYTRDIKRIGQQIYELYKDQITTDYEKNKELVKQVVDVYSKKVRNRIAGYITRKAKQASRPVEVTEQQEELEE.

This sequence belongs to the eukaryotic ribosomal protein eS17 family.

In Metallosphaera sedula (strain ATCC 51363 / DSM 5348 / JCM 9185 / NBRC 15509 / TH2), this protein is Small ribosomal subunit protein eS17.